The following is a 307-amino-acid chain: MNDTIPATGHLLGAADIRRIAADAGISPTKKFGQNFVIDPGTVRRIVREAGVTAADHVMEVGPGLGSLTLAILETGATMTAVEIDPPLAERLPGTVAEFMPEATSRLTVVNRDALTVTPENVPDFSDDASFTLVANLPYNVATPILLTLLERFDNLGSFLVMVQKEVADRLAAKPGSKIYGTPSVKLAWYGTAERVGTIGRNVFWPAPNVDSALVKFTRYQADDPAAPGTANSTDDGTQRELVFRLIDAAFGQRRKTLHAALKTIAPSEAFSIAGIDPTRRGETLTIAEFTALAKAIESCGDGDEAQ.

Positions 35, 37, 62, 83, 113, and 136 each coordinate S-adenosyl-L-methionine.

Belongs to the class I-like SAM-binding methyltransferase superfamily. rRNA adenine N(6)-methyltransferase family. RsmA subfamily.

Its subcellular location is the cytoplasm. It catalyses the reaction adenosine(1518)/adenosine(1519) in 16S rRNA + 4 S-adenosyl-L-methionine = N(6)-dimethyladenosine(1518)/N(6)-dimethyladenosine(1519) in 16S rRNA + 4 S-adenosyl-L-homocysteine + 4 H(+). In terms of biological role, specifically dimethylates two adjacent adenosines (A1518 and A1519) in the loop of a conserved hairpin near the 3'-end of 16S rRNA in the 30S particle. May play a critical role in biogenesis of 30S subunits. The polypeptide is Ribosomal RNA small subunit methyltransferase A (Bifidobacterium longum subsp. infantis (strain ATCC 15697 / DSM 20088 / JCM 1222 / NCTC 11817 / S12)).